The primary structure comprises 686 residues: MGPRSRQRRTGTVQSTNDSSSLSKRSLAAQGYVSDAFAPLLVPGIVRRTPLIHRGYYVRARAVRHCVRAFLDLTGAIRSPTRAQILSLGSGSDSLYFRLKAAGLLTRTAVWEVDFPDVSRLKAKRIEETPELCAQTGPFKIGDSASTLCFESSDYRILGADLRELQRLGEALDSAGLDATSPTLILAEAVLTYLEPSRAAALIAWVAQRFPNALFVIYEQMKPGDAFGQIMLQHFRRLNSPLHGLELFPDVEAQRQRFLQAGWTTCSALDLNEFYRRLIPADERRRVETLEPFDEFEEWHLKCSHYFILAASRGDILSETPVFLPSEASFQIDPALPSGFLSASVVTSDHQHSSLQRYGHTSVLLSPGIIFSAGGFGEQEGRHCRVSRFHLLSRSCDSEWKGCQISTLGTEGQWDGRLYHTMTRLSDTRVLVLGGRLSPVNPASGALQLDIYKSEDNCPEGQNVVVTKAALEEGSMLSCWRHSTTEVYYQNQRYLFVYGGRSVTDPVLSDCRFLHVETMAWVRIPVQGSSPEGRHSHSACSWQGGALIAGGLGASEEPLSSVFFLRPVSSGFLWESIHIQPSITPRYSHTAHVFNGKLLLVGGVWIHSSSVPGVTVISLTTGLSSEYQIDTASVPWPLMLHNHSSALLPEEQQLLLIGGGGNCFSFGTYFNPHTVGLDLSSLGLGQ.

Residues 1 to 22 (MGPRSRQRRTGTVQSTNDSSSL) are disordered. The segment covering 10–22 (TGTVQSTNDSSSL) has biased composition (polar residues). Residues arginine 59, glycine 89, aspartate 114, 161-162 (DL), and glutamate 188 contribute to the S-adenosyl-L-methionine site.

The protein belongs to the methyltransferase superfamily. LCMT family. As to quaternary structure, interacts with RNF144B/IBRDC2.

The enzyme catalyses 7-[(3S)-3-amino-3-carboxypropyl]wyosine(37) in tRNA(Phe) + S-adenosyl-L-methionine = 7-[(3S)-(3-amino-3-methoxycarbonyl)propyl]wyosine(37) in tRNA(Phe) + S-adenosyl-L-homocysteine. It carries out the reaction 7-[(3S)-(3-amino-3-methoxycarbonyl)propyl]wyosine(37) in tRNA(Phe) + S-adenosyl-L-methionine + CO2 = wybutosine(37) in tRNA(Phe) + S-adenosyl-L-homocysteine + 2 H(+). It participates in tRNA modification; wybutosine-tRNA(Phe) biosynthesis. Its function is as follows. Probable S-adenosyl-L-methionine-dependent methyltransferase that acts as a component of the wybutosine biosynthesis pathway. Wybutosine is a hyper modified guanosine with a tricyclic base found at the 3'-position adjacent to the anticodon of eukaryotic phenylalanine tRNA. May methylate the carboxyl group of leucine residues to form alpha-leucine ester residues. This is tRNA wybutosine-synthesizing protein 4 (Lcmt2) from Rattus norvegicus (Rat).